A 690-amino-acid chain; its full sequence is Sodium-dependent phosphate transport protein 2B (690 aa).

The tract at residues 1 to 42 (MAPWPELGDAQPNPDKYLEGAAGQQPTAPDKSKETNKTDNTE) is disordered. Topologically, residues 1 to 100 (MAPWPELGDA…ILCFFQGIGR (100 aa)) are cytoplasmic. The span at 30-40 (DKSKETNKTDN) shows a compositional bias: basic and acidic residues. Residues 101–121 (LILLLGFLYFFVCSLDILSSA) traverse the membrane as a helical segment. Over 122-135 (FQLVGGKMAGQFFS) the chain is Extracellular. Residues 136–156 (NSSIMSNPLLGLVIGVLVTVL) form a helical membrane-spanning segment. The Cytoplasmic segment spans residues 157–212 (VQSSSTSTSIVVSMVSSSLLTVRAAIPIIMGANIGTSITNTIVALMQVGDRSEFRR). Residues 213–233 (AFAGATVHDFFNWLSVLVLLP) form a helical membrane-spanning segment. Residues 234–362 (VEVATHYLEI…IFVNFHLPDL (129 aa)) are Extracellular-facing. Asn-295, Asn-308, Asn-313, Asn-321, and Asn-340 each carry an N-linked (GlcNAc...) asparagine glycan. The cysteines at positions 303 and 350 are disulfide-linked. Residues 363–383 (AVGTILLILSLLVLCGCLIMI) traverse the membrane as a helical segment. Residues 384–407 (VKILGSVLKGQVATVIKKTINTDF) lie on the Cytoplasmic side of the membrane. The chain crosses the membrane as a helical span at residues 408–428 (PFPFAWLTGYLAILVGAGMTF). Over 429 to 485 (IVQSSSVFTSALTPLIGIGVITIERAYPLTLGSNIGTTTTAILAALASPGNALRSSL) the chain is Extracellular. Residues 486–506 (QIALCHFFFNISGILLWYPIP) form a helical membrane-spanning segment. The Cytoplasmic segment spans residues 507-525 (FTRLPIRMAKGLGNISAKY). Residues 526–546 (RWFAVFYLIIFFFLIPLTVFG) traverse the membrane as a helical segment. Residues 547–552 (LSLAGW) are Extracellular-facing. A helical membrane pass occupies residues 553-573 (RVLVGVGVPVVFIIILVLCLR). Topologically, residues 574–689 (LLQSRCPRVL…ASDSKTECTA (116 aa)) are cytoplasmic.

The protein belongs to the SLC34A transporter family. In terms of tissue distribution, highly expressed in lung. Also detected in pancreas, kidney, small intestine, ovary, testis, prostate and mammary gland. In lung, it is found in alveolar type II cells but not in bronchiolar epithelium.

The protein resides in the apical cell membrane. The catalysed reaction is 3 Na(+)(out) + phosphate(out) = 3 Na(+)(in) + phosphate(in). Its function is as follows. Involved in actively transporting phosphate into cells via Na(+) cotransport. The chain is Sodium-dependent phosphate transport protein 2B (SLC34A2) from Homo sapiens (Human).